Consider the following 413-residue polypeptide: MPSSISWGLLLLAGLSCLATGCLIEDSEKSDAPKHDQENSASHKIAPNLAEFAFSLYRVLAHESNTTNIFFSPVSIATALGSLSLGTKADTHTQIMEGVGFNLTEISEAEIHQGFQHLLQNLNKSNSQLQLTTGNGLFIDHNMKLLDKFLEDIKNLYHSEAFSTDFTNTEEAKKQINTYVEKGTQGKIVDLVKDLDRDSGLALVNYIFFKGTLEKPFKADHTMEQDFHVDEATTVRVPMMNRLGMFDLHYCPTLSSMVLKMKYLGDITAIFIMPKVGRMEYVEETLTKEFLDKLLKKDYTGKNTVHFPKLSISGTIDLKPVLTRLGITKVFSHEADLSGITEDAPLRVSQALHKAVLTIDEKGTEAERHTVKGPMALTLAPEVKFNRPFLVTLYDRSTKSPLFVGRVVNPTLH.

The N-terminal stretch at 1-21 is a signal peptide; sequence MPSSISWGLLLLAGLSCLATG. N-linked (GlcNAc...) asparagine glycosylation is found at Asn-65, Asn-102, and Asn-123. Residues 368-387 form an RCL region; the sequence is RHTVKGPMALTLAPEVKFNR.

Belongs to the serpin family.

The protein resides in the secreted. Inhibitor of serine proteases. This chain is Alpha-1-antitrypsin-like protein GS55-LT, found in Ictidomys tridecemlineatus (Thirteen-lined ground squirrel).